Consider the following 339-residue polypeptide: Dihydroorotate dehydrogenase (quinone) (339 aa).

FMN-binding positions include 62–66 and Thr-86; that span reads AGMDK. Residue Lys-66 coordinates substrate. Position 111 to 115 (111 to 115) interacts with substrate; sequence NRMGF. Residues Asn-139 and Asn-172 each coordinate FMN. A substrate-binding site is contributed by Asn-172. Ser-175 serves as the catalytic Nucleophile. Asn-177 is a binding site for substrate. FMN-binding residues include Lys-217 and Thr-245. 246 to 247 lines the substrate pocket; it reads NT. FMN-binding positions include Gly-268, Gly-297, and 318-319; that span reads YS.

The protein belongs to the dihydroorotate dehydrogenase family. Type 2 subfamily. In terms of assembly, monomer. FMN is required as a cofactor.

It is found in the cell membrane. It carries out the reaction (S)-dihydroorotate + a quinone = orotate + a quinol. It functions in the pathway pyrimidine metabolism; UMP biosynthesis via de novo pathway; orotate from (S)-dihydroorotate (quinone route): step 1/1. In terms of biological role, catalyzes the conversion of dihydroorotate to orotate with quinone as electron acceptor. This chain is Dihydroorotate dehydrogenase (quinone), found in Shewanella baltica (strain OS185).